The primary structure comprises 159 residues: MRTNCIYPGTFDPITNGHLDVIKRALRIFDNVIVAVAKSDNKKPFFELDKRVEMVKEATKSLENIEVIAFENLLVDFAKSQDTCFVIRGLRAVSDFEYELQLGYANRSLWDKFETIYLMPTIKYSFISSSIVRSIFEHGGDISHLVPKEILPFLEDKKC.

Threonine 10 lines the substrate pocket. ATP is bound by residues 10 to 11 (TF) and histidine 18. Residues lysine 42, leucine 74, and arginine 88 each coordinate substrate. Residues 89–91 (GLR), glutamate 99, and 124–130 (YSFISSS) each bind ATP.

Belongs to the bacterial CoaD family. Homohexamer. Mg(2+) is required as a cofactor.

The protein localises to the cytoplasm. The catalysed reaction is (R)-4'-phosphopantetheine + ATP + H(+) = 3'-dephospho-CoA + diphosphate. The protein operates within cofactor biosynthesis; coenzyme A biosynthesis; CoA from (R)-pantothenate: step 4/5. Its function is as follows. Reversibly transfers an adenylyl group from ATP to 4'-phosphopantetheine, yielding dephospho-CoA (dPCoA) and pyrophosphate. In Campylobacter hominis (strain ATCC BAA-381 / DSM 21671 / CCUG 45161 / LMG 19568 / NCTC 13146 / CH001A), this protein is Phosphopantetheine adenylyltransferase.